Consider the following 364-residue polypeptide: Mitogen-activated protein kinase 11 (364 aa).

In terms of domain architecture, Protein kinase spans 24–308 (LQGLRPVGSG…AAEALAHAYF (285 aa)). ATP-binding positions include 30–38 (VGSGAYGSV) and Lys-53. Position 71 (Glu-71) interacts with nilotinib. Asp-168 serves as the catalytic Proton acceptor. Thr-180 carries the post-translational modification Phosphothreonine; by MAP2K3, MAP2K4 and MAP2K6. The TXY motif lies at 180 to 182 (TGY). Tyr-182 bears the Phosphotyrosine; by MAP2K3, MAP2K4 and MAP2K6 mark. The interval 312–331 (HDPDDEPEAEPYDESVEAKE) is disordered. Residues 314–326 (PDDEPEAEPYDES) are compositionally biased toward acidic residues. Phosphotyrosine; by ZAP70 is present on Tyr-323.

Belongs to the protein kinase superfamily. CMGC Ser/Thr protein kinase family. MAP kinase subfamily. As to quaternary structure, interacts with HDAC3 and DUSP16. The cofactor is Mg(2+). Post-translationally, dually phosphorylated on Thr-180 and Tyr-182 by MAP2K3/MKK3, MAP2K4/MKK4 and MAP2K6/MKK6, which activates the enzyme.

It localises to the cytoplasm. Its subcellular location is the nucleus. The enzyme catalyses L-seryl-[protein] + ATP = O-phospho-L-seryl-[protein] + ADP + H(+). The catalysed reaction is L-threonyl-[protein] + ATP = O-phospho-L-threonyl-[protein] + ADP + H(+). Activated by phosphorylation on threonine and tyrosine by MAP2K3/MKK3, MAP2K4/MKK4 and MAP2K6/MKK6. MAP2K3/MKK3 and MAP2K6/MKK6 are both essential for the activation of MAPK11 induced by environmental stress. HDAC3 interacts directly and selectively with MAPK11 to repress ATF2 transcriptional activity, and regulate TNF gene expression in LPS-stimulated cells. Inhibited by SB203580 and pyridinyl-imidazole related compounds. Functionally, serine/threonine kinase which acts as an essential component of the MAP kinase signal transduction pathway. MAPK11 is one of the four p38 MAPKs which play an important role in the cascades of cellular responses evoked by extracellular stimuli such as pro-inflammatory cytokines or physical stress leading to direct activation of transcription factors. Accordingly, p38 MAPKs phosphorylate a broad range of proteins and it has been estimated that they may have approximately 200 to 300 substrates each. MAPK11 functions are mostly redundant with those of MAPK14. Some of the targets are downstream kinases which are activated through phosphorylation and further phosphorylate additional targets. RPS6KA5/MSK1 and RPS6KA4/MSK2 can directly phosphorylate and activate transcription factors such as CREB1, ATF1, the NF-kappa-B isoform RELA/NFKB3, STAT1 and STAT3, but can also phosphorylate histone H3 and the nucleosomal protein HMGN1. RPS6KA5/MSK1 and RPS6KA4/MSK2 play important roles in the rapid induction of immediate-early genes in response to stress or mitogenic stimuli, either by inducing chromatin remodeling or by recruiting the transcription machinery. On the other hand, two other kinase targets, MAPKAPK2/MK2 and MAPKAPK3/MK3, participate in the control of gene expression mostly at the post-transcriptional level, by phosphorylating ZFP36 (tristetraprolin) and ELAVL1, and by regulating EEF2K, which is important for the elongation of mRNA during translation. MKNK1/MNK1 and MKNK2/MNK2, two other kinases activated by p38 MAPKs, regulate protein synthesis by phosphorylating the initiation factor EIF4E2. In the cytoplasm, the p38 MAPK pathway is an important regulator of protein turnover. For example, CFLAR is an inhibitor of TNF-induced apoptosis whose proteasome-mediated degradation is regulated by p38 MAPK phosphorylation. Ectodomain shedding of transmembrane proteins is regulated by p38 MAPKs as well. In response to inflammatory stimuli, p38 MAPKs phosphorylate the membrane-associated metalloprotease ADAM17. Such phosphorylation is required for ADAM17-mediated ectodomain shedding of TGF-alpha family ligands, which results in the activation of EGFR signaling and cell proliferation. Additional examples of p38 MAPK substrates are the FGFR1. FGFR1 can be translocated from the extracellular space into the cytosol and nucleus of target cells, and regulates processes such as rRNA synthesis and cell growth. FGFR1 translocation requires p38 MAPK activation. In the nucleus, many transcription factors are phosphorylated and activated by p38 MAPKs in response to different stimuli. Classical examples include ATF1, ATF2, ATF6, ELK1, PTPRH, DDIT3, TP53/p53 and MEF2C and MEF2A. The p38 MAPKs are emerging as important modulators of gene expression by regulating chromatin modifiers and remodelers. The promoters of several genes involved in the inflammatory response, such as IL6, IL8 and IL12B, display a p38 MAPK-dependent enrichment of histone H3 phosphorylation on 'Ser-10' (H3S10ph) in LPS-stimulated myeloid cells. This phosphorylation enhances the accessibility of the cryptic NF-kappa-B-binding sites marking promoters for increased NF-kappa-B recruitment. Phosphorylates methyltransferase DOT1L on 'Ser-834', 'Thr-900', 'Ser-902', 'Thr-984', 'Ser-1001', 'Ser-1009' and 'Ser-1104'. The polypeptide is Mitogen-activated protein kinase 11 (Mapk11) (Mus musculus (Mouse)).